A 337-amino-acid polypeptide reads, in one-letter code: D-alanine--D-alanine ligase (337 aa).

The region spanning 124–330 (KMWFSALGIP…FTEYLSLVIN (207 aa)) is the ATP-grasp domain. ATP is bound at residue 154 to 209 (ALANWGSIFIKAASQGSSVGCYKVDDSSKVAQVLKDAFGYAPYVVVEKTIKARELE). D284, E297, and N299 together coordinate Mg(2+).

Belongs to the D-alanine--D-alanine ligase family. The cofactor is Mg(2+). Mn(2+) is required as a cofactor.

It is found in the cytoplasm. It catalyses the reaction 2 D-alanine + ATP = D-alanyl-D-alanine + ADP + phosphate + H(+). Its pathway is cell wall biogenesis; peptidoglycan biosynthesis. Its function is as follows. Cell wall formation. This Shewanella sp. (strain W3-18-1) protein is D-alanine--D-alanine ligase.